The primary structure comprises 510 residues: Amidophosphoribosyltransferase (510 aa).

Cys2 acts as the Nucleophile in catalysis. One can recognise a Glutamine amidotransferase type-2 domain in the interval 2–239 (CGILGIALAD…PGEAVIIPKD (238 aa)). Residues Asp373 and Asp374 each contribute to the Mg(2+) site.

This sequence in the C-terminal section; belongs to the purine/pyrimidine phosphoribosyltransferase family. Requires Mg(2+) as cofactor.

It catalyses the reaction 5-phospho-beta-D-ribosylamine + L-glutamate + diphosphate = 5-phospho-alpha-D-ribose 1-diphosphate + L-glutamine + H2O. The protein operates within purine metabolism; IMP biosynthesis via de novo pathway; N(1)-(5-phospho-D-ribosyl)glycinamide from 5-phospho-alpha-D-ribose 1-diphosphate: step 1/2. The polypeptide is Amidophosphoribosyltransferase (ADE4) (Lachancea kluyveri (Yeast)).